Reading from the N-terminus, the 95-residue chain is Acylphosphatase (95 aa).

One can recognise an Acylphosphatase-like domain in the interval 7 to 94 (AALVRITGRV…EAPAGFRITR (88 aa)). Active-site residues include Arg22 and Asn40. The segment covering 76–88 (VASEEASSAEAPA) has biased composition (low complexity). The disordered stretch occupies residues 76–95 (VASEEASSAEAPAGFRITRG).

This sequence belongs to the acylphosphatase family.

The enzyme catalyses an acyl phosphate + H2O = a carboxylate + phosphate + H(+). The protein is Acylphosphatase (acyP) of Rhizobium meliloti (strain 1021) (Ensifer meliloti).